Here is a 387-residue protein sequence, read N- to C-terminus: Methyltransferase phomM (387 aa).

A methyltransferase domain region spans residues 98–223; that stretch reads PHRPKDLHIL…QSVADLFTTL (126 aa).

The protein belongs to the class I-like SAM-binding methyltransferase superfamily. Erg6/SMT family.

It participates in mycotoxin biosynthesis. Methyltransferase; part of the gene cluster that mediates the biosynthesis of the phomopsins, a group of hexapeptide mycotoxins which infects lupins and causes lupinosis disease in livestock. Within the pathway, phomM acts as an S-adenosylmethionine-dependent alpha-N-methyltransferase that catalyzes two successive N-methylation reactions, converting N-desmethyl-phomopsin A to phomopsin A and phomopsin A further to an N,N-dimethylated congener called phomopsin E. The pathway starts with the processing of the precursor phomA by several endopeptidases including kexin proteases as well as the cluster-specific S41 family peptidase phomP1 and the oligopeptidase phomG to produce 10 identical copies of the hexapeptide Tyr-Val-Ile-Pro-Ile-Asp. After being excised from the precursor peptide, the core peptides are cyclized and modified post-translationally by enzymes encoded within the gene cluster. The timing and order of proteolysis of the phomA precursor and PTMs are still unknown. Two tyrosinase-like enzymes, phomQ1 and phomQ2, catalyze the chlorination and hydroxylation of Tyr, respectively. PhomYb, is proposed to be involved in the construction of the macrocyclic structure. The other 4 ustYa family proteins may be involved in PTMs that generate the unique structure of phomopsin A. PhomYa is required for the hydroxylation of C-beta of Tyr. PhomYc, phomYd, and phomYe are responsible for the biosynthesis of 2,3-dehydroisoleucine (dIle), 2,3-dehydroaspartic acid (dAsp), and 3,4-dehydroproline (dPro), respectively. While dIle formation by phomYc is indispensable for the installation of dAsp by phomYd, the order of the other PTMs have not been elucidated yet. Most of the biosynthetic enzymes likely have broad substrate specificity, and thus, there might be a metabolic grid from a precursor to phomopsin A. The enzyme(s) responsible for the biosynthesis of 3,4-dehydrovaline (dVal) have also not been identified yet. Finally, phomM acts as an S-adenosylmethionine-dependent alpha-N-methyltransferase that catalyzes two successive N-methylation reactions, converting N-desmethyl-phomopsin A to phomopsin A and phomopsin A further to an N,N-dimethylated congener called phomopsin E. This chain is Methyltransferase phomM, found in Diaporthe leptostromiformis (Lupinosis disease fungus).